Consider the following 157-residue polypeptide: Small ribosomal subunit protein uS7 (157 aa).

The protein belongs to the universal ribosomal protein uS7 family. As to quaternary structure, part of the 30S ribosomal subunit. Contacts proteins S9 and S11.

One of the primary rRNA binding proteins, it binds directly to 16S rRNA where it nucleates assembly of the head domain of the 30S subunit. Is located at the subunit interface close to the decoding center, probably blocks exit of the E-site tRNA. The sequence is that of Small ribosomal subunit protein uS7 from Psychrobacter sp. (strain PRwf-1).